Reading from the N-terminus, the 79-residue chain is Conotoxin Vi6.1 (79 aa).

The N-terminal stretch at 1–22 (MKLTCVLIITVLFLTASQLITA) is a signal peptide. Positions 23-47 (DYSRDQRQYRAVRLGDEMRNFKGAR) are excised as a propeptide. 3 cysteine pairs are disulfide-bonded: Cys-49/Cys-62, Cys-56/Cys-67, and Cys-61/Cys-77. Residues Pro-60 and Pro-63 each carry the 4-hydroxyproline modification.

Expressed by the venom duct.

The protein localises to the secreted. In terms of biological role, ion channel inhibitor that inhibits the increase in intracellular calcium upon depolarization in DRG neurons. In vivo, both intraperitoneal and intracranial injections into mice induce hyperactivity. The polypeptide is Conotoxin Vi6.1 (Conus virgo (Virgin cone)).